We begin with the raw amino-acid sequence, 444 residues long: Spermidine/putrescine import ATP-binding protein PotA (444 aa).

The region spanning 11–332 is the ABC transporter domain; the sequence is ISLVDVDKEF…PVNKWVANFI (322 aa). 43–50 serves as a coordination point for ATP; sequence GPSGSGKT. Residues 111–201 are insert; the sequence is RIKKKAEEIP…ESFKKKYLTR (91 aa).

The protein belongs to the ABC transporter superfamily. Spermidine/putrescine importer (TC 3.A.1.11.1) family. As to quaternary structure, the complex is composed of two ATP-binding proteins (PotA), two transmembrane proteins (PotB and PotC) and a solute-binding protein (PotD).

The protein resides in the cell membrane. It catalyses the reaction ATP + H2O + polyamine-[polyamine-binding protein]Side 1 = ADP + phosphate + polyamineSide 2 + [polyamine-binding protein]Side 1.. In terms of biological role, part of the ABC transporter complex PotABCD involved in spermidine/putrescine import. Responsible for energy coupling to the transport system. This Mesomycoplasma hyopneumoniae (strain J / ATCC 25934 / NCTC 10110) (Mycoplasma hyopneumoniae) protein is Spermidine/putrescine import ATP-binding protein PotA.